Reading from the N-terminus, the 85-residue chain is Large ribosomal subunit protein bL27 (85 aa).

Residues 1–22 (MAHKKAGGSTNNGRDSESKRLG) form a disordered region.

Belongs to the bacterial ribosomal protein bL27 family.

This Psychromonas ingrahamii (strain DSM 17664 / CCUG 51855 / 37) protein is Large ribosomal subunit protein bL27.